A 61-amino-acid chain; its full sequence is N-acetyl-D-glucosamine kinase (61 aa).

Tyr-30 is modified (phosphotyrosine). An ATP-binding site is contributed by Ser-45.

This sequence belongs to the eukaryotic-type N-acetylglucosamine kinase family. Homodimer.

The enzyme catalyses N-acetyl-D-glucosamine + ATP = N-acetyl-D-glucosamine 6-phosphate + ADP + H(+). The catalysed reaction is aldehydo-N-acetyl-D-mannosamine + ATP = aldehydo-N-acetyl-D-mannosamine 6-phosphate + ADP + H(+). It carries out the reaction N-acetyl-D-muramoyl-L-alanyl-D-isoglutamine + ATP = 6-O-phospho-N-acetyl-D-muramoyl-L-alanyl-D-isoglutamine + ADP + H(+). Its pathway is amino-sugar metabolism; N-acetylneuraminate degradation. Functionally, converts endogenous N-acetylglucosamine (GlcNAc), a major component of complex carbohydrates, from lysosomal degradation or nutritional sources into GlcNAc 6-phosphate. Also has N-acetylmannosamine (ManNAc) kinase activity. Involved in the N-glycolylneuraminic acid (Neu5Gc) degradation pathway. Also involved in innate immunity by promoting detection of bacterial peptidoglycan by NOD2: acts by catalyzing phosphorylation of muramyl dipeptide (MDP), a fragment of bacterial peptidoglycan, to generate 6-O-phospho-muramyl dipeptide, which acts as a direct ligand for NOD2. This is N-acetyl-D-glucosamine kinase from Mesocricetus auratus (Golden hamster).